The sequence spans 331 residues: Ribosomal RNA small subunit methyltransferase H (331 aa).

S-adenosyl-L-methionine contacts are provided by residues 38–40, Asp-56, Phe-83, Asp-100, and Gln-107; that span reads GGY. The tract at residues 289-331 is disordered; it reads AELAENPRARSARLRVGVRTDAPAGKVDPQALGTPLIPKKGRR.

Belongs to the methyltransferase superfamily. RsmH family.

The protein localises to the cytoplasm. The catalysed reaction is cytidine(1402) in 16S rRNA + S-adenosyl-L-methionine = N(4)-methylcytidine(1402) in 16S rRNA + S-adenosyl-L-homocysteine + H(+). Its function is as follows. Specifically methylates the N4 position of cytidine in position 1402 (C1402) of 16S rRNA. The polypeptide is Ribosomal RNA small subunit methyltransferase H (Cereibacter sphaeroides (strain ATCC 17029 / ATH 2.4.9) (Rhodobacter sphaeroides)).